The chain runs to 181 residues: Large ribosomal subunit protein uL5c (181 aa).

This sequence belongs to the universal ribosomal protein uL5 family. In terms of assembly, part of the 50S ribosomal subunit; contacts the 5S rRNA.

Its subcellular location is the plastid. It localises to the chloroplast. In terms of biological role, binds 5S rRNA, forms part of the central protuberance of the 50S subunit. The sequence is that of Large ribosomal subunit protein uL5c (rpl5) from Pyropia yezoensis (Susabi-nori).